We begin with the raw amino-acid sequence, 447 residues long: Tubulin beta-6 chain (447 aa).

GTP contacts are provided by glutamine 11, glutamate 69, serine 138, glycine 142, threonine 143, glycine 144, asparagine 204, and asparagine 226. Mg(2+) is bound at residue glutamate 69. The segment at 426–447 (QDATAEEEGEFDEDEELDDGMM) is disordered. The segment covering 429–447 (TAEEEGEFDEDEELDDGMM) has biased composition (acidic residues).

It belongs to the tubulin family. Dimer of alpha and beta chains. A typical microtubule is a hollow water-filled tube with an outer diameter of 25 nm and an inner diameter of 15 nM. Alpha-beta heterodimers associate head-to-tail to form protofilaments running lengthwise along the microtubule wall with the beta-tubulin subunit facing the microtubule plus end conferring a structural polarity. Microtubules usually have 13 protofilaments but different protofilament numbers can be found in some organisms and specialized cells. Requires Mg(2+) as cofactor.

Its subcellular location is the cytoplasm. It localises to the cytoskeleton. In terms of biological role, tubulin is the major constituent of microtubules, a cylinder consisting of laterally associated linear protofilaments composed of alpha- and beta-tubulin heterodimers. Microtubules grow by the addition of GTP-tubulin dimers to the microtubule end, where a stabilizing cap forms. Below the cap, tubulin dimers are in GDP-bound state, owing to GTPase activity of alpha-tubulin. The polypeptide is Tubulin beta-6 chain (TUBB6) (Ectocarpus variabilis (Brown alga)).